We begin with the raw amino-acid sequence, 113 residues long: MRIFVYGSLRHKQGNSHWMTNAQLLGDFSIDNYQLYSLGHYPGAVPGNGTVHGEVYRIDNATLAELDALRTRGGEYARQLIQTPYGSAWMYVYQRPVDGLKLIESGDWLDRDK.

This sequence belongs to the gamma-glutamylcyclotransferase family.

The protein is Gamma-glutamylcyclotransferase family protein YtfP (ytfP) of Escherichia coli O157:H7.